We begin with the raw amino-acid sequence, 203 residues long: Glycerol-3-phosphate acyltransferase (203 aa).

5 helical membrane passes run 5–25, 55–75, 88–108, 114–134, and 162–182; these read VLGL…FGVV, KLGI…ILVA, FTVL…WLGF, VATG…AGAV, and FVAH…AALI.

The protein belongs to the PlsY family. Probably interacts with PlsX.

The protein resides in the cell inner membrane. It catalyses the reaction an acyl phosphate + sn-glycerol 3-phosphate = a 1-acyl-sn-glycero-3-phosphate + phosphate. The protein operates within lipid metabolism; phospholipid metabolism. Functionally, catalyzes the transfer of an acyl group from acyl-phosphate (acyl-PO(4)) to glycerol-3-phosphate (G3P) to form lysophosphatidic acid (LPA). This enzyme utilizes acyl-phosphate as fatty acyl donor, but not acyl-CoA or acyl-ACP. The sequence is that of Glycerol-3-phosphate acyltransferase from Anaeromyxobacter sp. (strain Fw109-5).